The following is a 163-amino-acid chain: Regulatory protein RecX (163 aa).

Residues 1-21 form a disordered region; sequence MSDAEDIPTGRKRRPREQTPV.

The protein belongs to the RecX family.

The protein localises to the cytoplasm. In terms of biological role, modulates RecA activity. This chain is Regulatory protein RecX, found in Stenotrophomonas maltophilia (strain K279a).